The sequence spans 139 residues: mRNA stability protein mug134 (139 aa).

Residues 83-139 form a disordered region; sequence IGKEIPSPDTIPHRVVSAGSPNKEPSLHTKRPSESSPSGASSRRESVTRHDLESNEN. The span at 124–139 shows a compositional bias: basic and acidic residues; sequence SRRESVTRHDLESNEN.

This sequence belongs to the endosulfine family.

The protein localises to the nucleus. The protein resides in the cytoplasm. In terms of biological role, plays an essential role in initiation of the G0 program by preventing the degradation of specific nutrient-regulated mRNAs via the 5'-3' mRNA decay pathway. This chain is mRNA stability protein mug134 (mug134), found in Schizosaccharomyces pombe (strain 972 / ATCC 24843) (Fission yeast).